Here is a 103-residue protein sequence, read N- to C-terminus: Carboxysome shell protein CsoS1 (103 aa).

Residues A9–G94 form the BMC domain.

Belongs to the bacterial microcompartments protein family. CsoS1 subfamily. In terms of assembly, homohexamer with a small central pore. Forms a CsoS2-CsoS1-RuBisCO complex.

Its subcellular location is the carboxysome. Its function is as follows. One of the shell proteins of the carboxysome, a polyhedral inclusion where RuBisCO (ribulose bisphosphate carboxylase, ccbL-ccbS) is sequestered. Assembles into hexamers which make sheets that form the facets of the polyhedral carboxysome. This Prochlorococcus marinus (strain MIT 9313) protein is Carboxysome shell protein CsoS1.